Consider the following 442-residue polypeptide: tRNA-2-methylthio-N(6)-dimethylallyladenosine synthase (442 aa).

An MTTase N-terminal domain is found at 6 to 122 (RKFYIHTFGC…LPALIAEAGD (117 aa)). Residues Cys15, Cys51, Cys85, Cys157, Cys161, and Cys164 each coordinate [4Fe-4S] cluster. Residues 143–373 (RTQSLNAFVP…IDLQNGISAE (231 aa)) enclose the Radical SAM core domain. The region spanning 376–439 (GLAPGSVVEV…SATLFGQSAE (64 aa)) is the TRAM domain.

This sequence belongs to the methylthiotransferase family. MiaB subfamily. In terms of assembly, monomer. Requires [4Fe-4S] cluster as cofactor.

The protein resides in the cytoplasm. The catalysed reaction is N(6)-dimethylallyladenosine(37) in tRNA + (sulfur carrier)-SH + AH2 + 2 S-adenosyl-L-methionine = 2-methylsulfanyl-N(6)-dimethylallyladenosine(37) in tRNA + (sulfur carrier)-H + 5'-deoxyadenosine + L-methionine + A + S-adenosyl-L-homocysteine + 2 H(+). Functionally, catalyzes the methylthiolation of N6-(dimethylallyl)adenosine (i(6)A), leading to the formation of 2-methylthio-N6-(dimethylallyl)adenosine (ms(2)i(6)A) at position 37 in tRNAs that read codons beginning with uridine. The chain is tRNA-2-methylthio-N(6)-dimethylallyladenosine synthase from Chlorobium phaeobacteroides (strain DSM 266 / SMG 266 / 2430).